Here is a 91-residue protein sequence, read N- to C-terminus: Small ribosomal subunit protein bS20 (91 aa).

A disordered region spans residues 1–26; sequence MANLKSSKKDIRRTARRKERNGEDRT.

Belongs to the bacterial ribosomal protein bS20 family.

Functionally, binds directly to 16S ribosomal RNA. The chain is Small ribosomal subunit protein bS20 from Leptospira biflexa serovar Patoc (strain Patoc 1 / Ames).